We begin with the raw amino-acid sequence, 291 residues long: Nucleotide-binding protein lwe2422 (291 aa).

13–20 (GMSGAGKT) contacts ATP. A GTP-binding site is contributed by 63 to 66 (DLRG).

This sequence belongs to the RapZ-like family.

Functionally, displays ATPase and GTPase activities. This chain is Nucleotide-binding protein lwe2422, found in Listeria welshimeri serovar 6b (strain ATCC 35897 / DSM 20650 / CCUG 15529 / CIP 8149 / NCTC 11857 / SLCC 5334 / V8).